The sequence spans 412 residues: uncharacterized protein (412 aa).

This sequence belongs to the PQQ oxidoreductase GdhB family. Pyrroloquinoline quinone serves as cofactor.

This is an uncharacterized protein from Synechocystis sp. (strain ATCC 27184 / PCC 6803 / Kazusa).